The following is a 105-amino-acid chain: Large ribosomal subunit protein uL24 (105 aa).

Belongs to the universal ribosomal protein uL24 family. In terms of assembly, part of the 50S ribosomal subunit.

Functionally, one of two assembly initiator proteins, it binds directly to the 5'-end of the 23S rRNA, where it nucleates assembly of the 50S subunit. One of the proteins that surrounds the polypeptide exit tunnel on the outside of the subunit. This chain is Large ribosomal subunit protein uL24, found in Aromatoleum aromaticum (strain DSM 19018 / LMG 30748 / EbN1) (Azoarcus sp. (strain EbN1)).